The chain runs to 419 residues: Creatine kinase S-type, mitochondrial (419 aa).

A mitochondrion-targeting transit peptide spans 1–39 (MASTFSKLLTGRNASLLFATLGTGALTTGYLLNKQNVCA). Positions 40–64 (AAREQHKLFPPSADYPDLRKHNNCM) are cardiolipin-binding. One can recognise a Phosphagen kinase N-terminal domain in the interval 46-132 (KLFPPSADYP…FDPVIKLRHN (87 aa)). Residues 159 to 401 (YVLSSRVRTG…NYLVDCEKKL (243 aa)) enclose the Phosphagen kinase C-terminal domain. Residues 162–166 (SSRVR) and H225 each bind ATP. Phosphotyrosine is present on Y255. ATP contacts are provided by residues R270, R326, 354 to 359 (RGTGGV), and D369. T356 bears the Phosphothreonine mark.

It belongs to the ATP:guanido phosphotransferase family. In terms of assembly, exists as an octamer composed of four CKMT2 homodimers.

Its subcellular location is the mitochondrion inner membrane. The catalysed reaction is creatine + ATP = N-phosphocreatine + ADP + H(+). Functionally, reversibly catalyzes the transfer of phosphate between ATP and various phosphogens (e.g. creatine phosphate). Creatine kinase isoenzymes play a central role in energy transduction in tissues with large, fluctuating energy demands, such as skeletal muscle, heart, brain and spermatozoa. The chain is Creatine kinase S-type, mitochondrial (CKMT2) from Bos taurus (Bovine).